A 544-amino-acid polypeptide reads, in one-letter code: Chaperonin GroEL 1 (544 aa).

ATP contacts are provided by residues Thr-30–Pro-33, Lys-51, Asp-87–Thr-91, Gly-415, Asp-481–Leu-483, and Asp-497.

This sequence belongs to the chaperonin (HSP60) family. As to quaternary structure, forms a cylinder of 14 subunits composed of two heptameric rings stacked back-to-back. Interacts with the co-chaperonin GroES.

Its subcellular location is the cytoplasm. It carries out the reaction ATP + H2O + a folded polypeptide = ADP + phosphate + an unfolded polypeptide.. In terms of biological role, together with its co-chaperonin GroES, plays an essential role in assisting protein folding. The GroEL-GroES system forms a nano-cage that allows encapsulation of the non-native substrate proteins and provides a physical environment optimized to promote and accelerate protein folding. This chain is Chaperonin GroEL 1, found in Chlamydia caviae (strain ATCC VR-813 / DSM 19441 / 03DC25 / GPIC) (Chlamydophila caviae).